The chain runs to 456 residues: Acetylcholine receptor subunit alpha (456 aa).

The N-terminal stretch at 1–20 (MNYFILILPILPYLYGPAVC) is a signal peptide. Residues 21–230 (SEDETRLVKT…ITYHFLLLRL (210 aa)) lie on the Extracellular side of the membrane. 2 disulfide bridges follow: C148/C162 and C212/C213. N161 is a glycosylation site (N-linked (GlcNAc...) asparagine). 3 helical membrane-spanning segments follow: residues 231-255 (PLYFIVNVIIPCMLFSFLTGLVFYL), 263-281 (MTLSISVLLSLTVFLLVIV), and 297-316 (YMLFTMIFVIASIIITVIVI). At 317 to 428 (NTHHRSPSTH…WKFVAMVLDH (112 aa)) the chain is on the cytoplasmic side. Residues 429 to 447 (ILLCVFMAVCIIGTLGVFA) form a helical membrane-spanning segment.

Belongs to the ligand-gated ion channel (TC 1.A.9) family. Acetylcholine receptor (TC 1.A.9.1) subfamily. Alpha-1/CHRNA1 sub-subfamily. In terms of assembly, one of the alpha chains that assemble within the acetylcholine receptor, a pentamer of two alpha chains, a beta, a delta, and a gamma or epsilon chains.

It is found in the postsynaptic cell membrane. The protein resides in the cell membrane. The enzyme catalyses K(+)(in) = K(+)(out). It carries out the reaction Na(+)(in) = Na(+)(out). Upon acetylcholine binding, the AChR responds by an extensive change in conformation that affects all subunits and leads to opening of an ion-conducting channel across the plasma membrane. The chain is Acetylcholine receptor subunit alpha (chrna1) from Danio rerio (Zebrafish).